The chain runs to 224 residues: Pre-hexon-linking protein VIII (224 aa).

Position 64 is a phosphothreonine; by host (threonine 64). The propeptide occupies 112–154 (RQPSPSHIDIKDTMLAGTGIQLGEDIPSVSWIRPDGIFQLGGG).

Belongs to the adenoviridae hexon-linking protein family. Interacts with the peripentonal hexons as well as the hexons in the facets. Part of a complex composed of the core-capsid bridging protein, the endosome lysis protein VI and the hexon-linking protein VIII; these interactions bridge the virus core to the capsid. Cleaved by the viral protease during virion maturation. May cause the middle segment to be shed from the capsid.

Its subcellular location is the virion. It localises to the host nucleus. Functionally, structural component of the virion that acts as a cement protein on the capsid interior and which glue the peripentonal hexons and group-of-nine hexons together. This chain is Pre-hexon-linking protein VIII, found in Canine adenovirus serotype 1 (strain CLL) (CAdV-1).